Consider the following 189-residue polypeptide: Interferon alpha-1/13 (189 aa).

The first 23 residues, 1 to 23 (MASPFALLMVLVVLSCKSSCSLG), serve as a signal peptide directing secretion. Cystine bridges form between C24-C122 and C52-C162.

Belongs to the alpha/beta interferon family. As to quaternary structure, interacts with CR2.

Its subcellular location is the secreted. Its function is as follows. Produced by macrophages, IFN-alpha have antiviral activities. Interferon stimulates the production of two enzymes: a protein kinase and an oligoadenylate synthetase. This is Interferon alpha-1/13 (IFNA1) from Homo sapiens (Human).